The primary structure comprises 359 residues: DNA-directed RNA polymerase subunit alpha (359 aa).

Residues 1–226 form an alpha N-terminal domain (alpha-NTD) region; that stretch reads MLISQRPSLA…ELFGLARELN (226 aa). The segment at 241–359 is alpha C-terminal domain (alpha-CTD); sequence ADTIAAYAMP…GQDYAETEQL (119 aa). A disordered region spans residues 315–359; it reads FDPSAAAAEYPSEGWASETETVGGLGRVEDNGYDDGQDYAETEQL. Residues 345-359 are compositionally biased toward acidic residues; sequence NGYDDGQDYAETEQL.

The protein belongs to the RNA polymerase alpha chain family. As to quaternary structure, homodimer. The RNAP catalytic core consists of 2 alpha, 1 beta, 1 beta' and 1 omega subunit. When a sigma factor is associated with the core the holoenzyme is formed, which can initiate transcription.

It catalyses the reaction RNA(n) + a ribonucleoside 5'-triphosphate = RNA(n+1) + diphosphate. Functionally, DNA-dependent RNA polymerase catalyzes the transcription of DNA into RNA using the four ribonucleoside triphosphates as substrates. The sequence is that of DNA-directed RNA polymerase subunit alpha from Saccharopolyspora erythraea (strain ATCC 11635 / DSM 40517 / JCM 4748 / NBRC 13426 / NCIMB 8594 / NRRL 2338).